Reading from the N-terminus, the 334-residue chain is Geranylgeranyl pyrophosphate synthase ltmG (334 aa).

Residues Lys53, Arg56, and His85 each contribute to the isopentenyl diphosphate site. Positions 92 and 96 each coordinate Mg(2+). Arg101 provides a ligand contact to dimethylallyl diphosphate. Arg102 contacts isopentenyl diphosphate. Lys179, Thr180, and Gln213 together coordinate dimethylallyl diphosphate. Mg(2+) is bound at residue Asp216. 3 residues coordinate dimethylallyl diphosphate: Asn220, Lys230, and Lys240.

This sequence belongs to the FPP/GGPP synthase family. Mg(2+) serves as cofactor.

The catalysed reaction is isopentenyl diphosphate + dimethylallyl diphosphate = (2E)-geranyl diphosphate + diphosphate. It catalyses the reaction isopentenyl diphosphate + (2E)-geranyl diphosphate = (2E,6E)-farnesyl diphosphate + diphosphate. The enzyme catalyses isopentenyl diphosphate + (2E,6E)-farnesyl diphosphate = (2E,6E,10E)-geranylgeranyl diphosphate + diphosphate. It functions in the pathway secondary metabolite biosynthesis. Its function is as follows. Geranylgeranyl pyrophosphate synthase; part of the gene cluster that mediates the biosynthesis of lolitrems, indole-diterpene mycotoxins that are potent tremorgens in mammals, and are synthesized by clavicipitaceous fungal endophytes in association with their grass hosts. The geranylgeranyl diphosphate (GGPP) synthase ltmG is proposed to catalyze the first step in lolitrem biosynthesis. LtmG catalyzes a series of iterative condensations of isopentenyl diphosphate (IPP) with dimethylallyl diphosphate (DMAPP), geranyl diphosphate (GPP), and farnesyl diphosphate (FPP), to form GGPP. GGPP then condenses with indole-3-glycerol phosphate to form 3-geranylgeranylindole, an acyclic intermediate, to be incorporated into paxilline. Either ltmG or ltmC could be responsible for this step, as both are putative prenyl transferases. The FAD-dependent monooxygenase ltmM then catalyzes the epoxidation of the two terminal alkenes of the geranylgeranyl moiety, which is subsequently cyclized by ltmB, to paspaline. The cytochrome P450 monooxygenases ltmQ and ltmP can sequentially oxidize paspaline to terpendole E and terpendole F. Alternatively, ltmP converts paspaline to an intermediate which is oxidized by ltmQ to terpendole F. LtmF, ltmK, ltmE and ltmJ appear to be unique to the epichloe endophytes. The prenyltransferase ltmF is involved in the 27-hydroxyl-O-prenylation. The cytochrome P450 monooxygenase ltmK is required for the oxidative acetal ring formation. The multi-functional prenyltransferase ltmE is required for C20- and C21-prenylations of the indole ring of paspalanes and acts together with the cytochrome P450 monooxygenase ltmJ to yield lolitremanes by multiple oxidations and ring closures. The stereoisomer pairs of lolitriol and lolitrem N or lolitrem B and lolitrem F may be attributed to variations in the way in which ring closure can occur under the action of ltmJ. While the major product of this pathway is lolitrem B, the prenyl transferases and cytochrome P450 monooxygenases identified in this pathway have a remarkable versatility in their regio- and stereo-specificities to generate a diverse range of metabolites that are products of a metabolic grid rather than a linear pathway. In Epichloe festucae (strain Fl1), this protein is Geranylgeranyl pyrophosphate synthase ltmG.